A 436-amino-acid polypeptide reads, in one-letter code: Trigger factor (436 aa).

Positions 161-246 (DDQLNIDFVG…VNSVAEPKLP (86 aa)) constitute a PPIase FKBP-type domain.

It belongs to the FKBP-type PPIase family. Tig subfamily.

The protein localises to the cytoplasm. The catalysed reaction is [protein]-peptidylproline (omega=180) = [protein]-peptidylproline (omega=0). Functionally, involved in protein export. Acts as a chaperone by maintaining the newly synthesized protein in an open conformation. Functions as a peptidyl-prolyl cis-trans isomerase. This is Trigger factor from Pseudomonas aeruginosa (strain LESB58).